The primary structure comprises 40 residues: Protein P4 (40 aa).

A helical membrane pass occupies residues 10–29 (KYFAYGVAISAAGAILAEYV).

The protein resides in the virion membrane. Functionally, may interact with the viral DNA. In Pseudoalteromonas phage PM2 (Bacteriophage PM2), this protein is Protein P4 (IV).